Reading from the N-terminus, the 327-residue chain is Spermidine/putrescine import ATP-binding protein PotA (327 aa).

Positions 5–235 constitute an ABC transporter domain; it reads IKVEAVEKHF…PKTLFVATFI (231 aa). Position 37 to 44 (37 to 44) interacts with ATP; it reads GPSGCGKT.

It belongs to the ABC transporter superfamily. Spermidine/putrescine importer (TC 3.A.1.11.1) family. The complex is composed of two ATP-binding proteins (PotA), two transmembrane proteins (PotB and PotC) and a solute-binding protein (PotD).

It is found in the cell membrane. It carries out the reaction ATP + H2O + polyamine-[polyamine-binding protein]Side 1 = ADP + phosphate + polyamineSide 2 + [polyamine-binding protein]Side 1.. Part of the ABC transporter complex PotABCD involved in spermidine/putrescine import. Responsible for energy coupling to the transport system. The protein is Spermidine/putrescine import ATP-binding protein PotA of Bacillus thuringiensis subsp. konkukian (strain 97-27).